Reading from the N-terminus, the 263-residue chain is Ubiquitin domain-containing protein 7SL RNA2 (263 aa).

In terms of domain architecture, Ubiquitin-like 1 spans 1-53 (MNVDIDTETGSSFSITIDFGETVLQIKEKIEKSQGIPVSKQILYLDGKALEDD). Positions 74-93 (ADPNQSNEQTEQSKQIDDKK) are disordered. Over residues 76-86 (PNQSNEQTEQS) the composition is skewed to polar residues. The Ubiquitin-like 2 domain occupies 184–263 (FTVHVKPYQE…GDTIELIREK (80 aa)).

Belongs to the ubiquitin family. As to expression, expressed in seedlings, roots, stems, rosettes and flowers (at protein level).

It localises to the nucleus. Controls phase transition from the vegetative to the reproductive state. Involved in the maintenance of the shoot apical meristem (SAM) thus preventing inflorescence meristem (IM) formation and subsequent inflorescence stem development during flowering. Regulates leaf and organ morphology. The polypeptide is Ubiquitin domain-containing protein 7SL RNA2 (Arabidopsis thaliana (Mouse-ear cress)).